Consider the following 308-residue polypeptide: tRNA dimethylallyltransferase (308 aa).

14-21 provides a ligand contact to ATP; sequence GPTASGKT. Position 16 to 21 (16 to 21) interacts with substrate; that stretch reads TASGKT. Interaction with substrate tRNA regions lie at residues 39–42, 163–167, and 244–249; these read DSAL, QRLAR, and RCVGYR.

Belongs to the IPP transferase family. In terms of assembly, monomer. Requires Mg(2+) as cofactor.

It catalyses the reaction adenosine(37) in tRNA + dimethylallyl diphosphate = N(6)-dimethylallyladenosine(37) in tRNA + diphosphate. In terms of biological role, catalyzes the transfer of a dimethylallyl group onto the adenine at position 37 in tRNAs that read codons beginning with uridine, leading to the formation of N6-(dimethylallyl)adenosine (i(6)A). In Shewanella halifaxensis (strain HAW-EB4), this protein is tRNA dimethylallyltransferase.